A 264-amino-acid chain; its full sequence is Thymidylate synthase (264 aa).

Arg21 contributes to the dUMP binding site. His51 lines the (6R)-5,10-methylene-5,6,7,8-tetrahydrofolate pocket. 126 to 127 lines the dUMP pocket; sequence RR. The Nucleophile role is filled by Cys146. Residues 166–169, Asn177, and 207–209 each bind dUMP; these read RSAD and HIY. Asp169 serves as a coordination point for (6R)-5,10-methylene-5,6,7,8-tetrahydrofolate. Ala263 contacts (6R)-5,10-methylene-5,6,7,8-tetrahydrofolate.

Belongs to the thymidylate synthase family. Bacterial-type ThyA subfamily. Homodimer.

It is found in the cytoplasm. It carries out the reaction dUMP + (6R)-5,10-methylene-5,6,7,8-tetrahydrofolate = 7,8-dihydrofolate + dTMP. The protein operates within pyrimidine metabolism; dTTP biosynthesis. Its function is as follows. Catalyzes the reductive methylation of 2'-deoxyuridine-5'-monophosphate (dUMP) to 2'-deoxythymidine-5'-monophosphate (dTMP) while utilizing 5,10-methylenetetrahydrofolate (mTHF) as the methyl donor and reductant in the reaction, yielding dihydrofolate (DHF) as a by-product. This enzymatic reaction provides an intracellular de novo source of dTMP, an essential precursor for DNA biosynthesis. The sequence is that of Thymidylate synthase from Brucella anthropi (strain ATCC 49188 / DSM 6882 / CCUG 24695 / JCM 21032 / LMG 3331 / NBRC 15819 / NCTC 12168 / Alc 37) (Ochrobactrum anthropi).